The sequence spans 163 residues: 2-C-methyl-D-erythritol 2,4-cyclodiphosphate synthase (163 aa).

A divalent metal cation is bound by residues aspartate 12 and histidine 14. 4-CDP-2-C-methyl-D-erythritol 2-phosphate contacts are provided by residues 12–14 (DVH) and 38–39 (HS). Histidine 46 is an a divalent metal cation binding site. Residues 60-62 (DIG), 65-69 (FPDTD), 136-139 (TTTE), phenylalanine 143, and arginine 146 contribute to the 4-CDP-2-C-methyl-D-erythritol 2-phosphate site.

Belongs to the IspF family. In terms of assembly, homotrimer. A divalent metal cation serves as cofactor.

It catalyses the reaction 4-CDP-2-C-methyl-D-erythritol 2-phosphate = 2-C-methyl-D-erythritol 2,4-cyclic diphosphate + CMP. It functions in the pathway isoprenoid biosynthesis; isopentenyl diphosphate biosynthesis via DXP pathway; isopentenyl diphosphate from 1-deoxy-D-xylulose 5-phosphate: step 4/6. Involved in the biosynthesis of isopentenyl diphosphate (IPP) and dimethylallyl diphosphate (DMAPP), two major building blocks of isoprenoid compounds. Catalyzes the conversion of 4-diphosphocytidyl-2-C-methyl-D-erythritol 2-phosphate (CDP-ME2P) to 2-C-methyl-D-erythritol 2,4-cyclodiphosphate (ME-CPP) with a corresponding release of cytidine 5-monophosphate (CMP). This is 2-C-methyl-D-erythritol 2,4-cyclodiphosphate synthase from Acinetobacter baylyi (strain ATCC 33305 / BD413 / ADP1).